Reading from the N-terminus, the 164-residue chain is Ferredoxin-type protein NapF (164 aa).

4Fe-4S ferredoxin-type domains are found at residues 28–57 (GDES…RGAG), 58–89 (GYPS…PRHT), and 132–161 (YQPQ…AEYL). Positions 37, 40, 43, 47, 69, 72, 75, 79, 141, 144, 147, and 151 each coordinate [4Fe-4S] cluster.

It belongs to the NapF family. In terms of assembly, interacts with the cytoplasmic NapA precursor. [4Fe-4S] cluster serves as cofactor.

It is found in the cytoplasm. Could be involved in the maturation of NapA, the catalytic subunit of the periplasmic nitrate reductase, before its export into the periplasm. This chain is Ferredoxin-type protein NapF, found in Escherichia coli O157:H7.